Consider the following 407-residue polypeptide: Aspartate aminotransferase, cytoplasmic (407 aa).

L-aspartate contacts are provided by G39, W136, and N189. Position 253 is an N6-(pyridoxal phosphate)lysine (K253). R381 contacts L-aspartate.

The protein belongs to the class-I pyridoxal-phosphate-dependent aminotransferase family. In terms of assembly, homodimer. The cofactor is pyridoxal 5'-phosphate.

Its subcellular location is the cytoplasm. It catalyses the reaction L-aspartate + 2-oxoglutarate = oxaloacetate + L-glutamate. Important for the metabolism of amino acids and Krebs-cycle related organic acids. In plants, it is involved in nitrogen metabolism and in aspects of carbon and energy metabolism. In Oryza sativa subsp. japonica (Rice), this protein is Aspartate aminotransferase, cytoplasmic.